The primary structure comprises 157 residues: Phosphopantetheine adenylyltransferase (157 aa).

Ser-8 serves as a coordination point for substrate. Residues 8–9 (SF) and His-16 contribute to the ATP site. Substrate is bound by residues Lys-40, Thr-72, and Arg-86. ATP-binding positions include 87–89 (GLR), Glu-97, and 122–128 (YSFLSSS).

It belongs to the bacterial CoaD family. In terms of assembly, homohexamer. Requires Mg(2+) as cofactor.

It localises to the cytoplasm. The catalysed reaction is (R)-4'-phosphopantetheine + ATP + H(+) = 3'-dephospho-CoA + diphosphate. It participates in cofactor biosynthesis; coenzyme A biosynthesis; CoA from (R)-pantothenate: step 4/5. Functionally, reversibly transfers an adenylyl group from ATP to 4'-phosphopantetheine, yielding dephospho-CoA (dPCoA) and pyrophosphate. The polypeptide is Phosphopantetheine adenylyltransferase (Gloeothece citriformis (strain PCC 7424) (Cyanothece sp. (strain PCC 7424))).